A 127-amino-acid polypeptide reads, in one-letter code: Mitochondrial pyruvate carrier 2 (127 aa).

At alanine 2–threonine 40 the chain is on the mitochondrial matrix side. Lysine 26 carries the post-translational modification N6-acetyllysine. A helical membrane pass occupies residues valine 41–alanine 61. Over arginine 62–serine 72 the chain is Mitochondrial intermembrane. The helical transmembrane segment at threonine 73 to isoleucine 90 threads the bilayer. Over proline 91–lysine 92 the chain is Mitochondrial matrix. The helical transmembrane segment at asparagine 93 to tryptophan 115 threads the bilayer. At arginine 116–glutamine 127 the chain is on the mitochondrial intermembrane side.

This sequence belongs to the mitochondrial pyruvate carrier (MPC) (TC 2.A.105) family. In terms of assembly, homodimer. Homooligomer. Forms heterodimers with MPC1 and MPC1L. The heterodimer is the more stable and dominant form.

It localises to the mitochondrion inner membrane. The enzyme catalyses pyruvate(out) + H(+)(out) = pyruvate(in) + H(+)(in). In terms of biological role, mediates the uptake of pyruvate into mitochondria. This chain is Mitochondrial pyruvate carrier 2 (Mpc2), found in Mus musculus (Mouse).